Reading from the N-terminus, the 210-residue chain is Orotate phosphoribosyltransferase (210 aa).

5-phospho-alpha-D-ribose 1-diphosphate-binding positions include R97, K101, H103, and 123–131 (EDLISTGGS). Residue S127 coordinates orotate.

The protein belongs to the purine/pyrimidine phosphoribosyltransferase family. PyrE subfamily. As to quaternary structure, homodimer. Requires Mg(2+) as cofactor.

It carries out the reaction orotidine 5'-phosphate + diphosphate = orotate + 5-phospho-alpha-D-ribose 1-diphosphate. Its pathway is pyrimidine metabolism; UMP biosynthesis via de novo pathway; UMP from orotate: step 1/2. In terms of biological role, catalyzes the transfer of a ribosyl phosphate group from 5-phosphoribose 1-diphosphate to orotate, leading to the formation of orotidine monophosphate (OMP). This Enterococcus faecalis (strain ATCC 700802 / V583) protein is Orotate phosphoribosyltransferase.